We begin with the raw amino-acid sequence, 500 residues long: Lysine--tRNA ligase (500 aa).

Mg(2+)-binding residues include Glu410 and Glu417.

It belongs to the class-II aminoacyl-tRNA synthetase family. Homodimer. Mg(2+) serves as cofactor.

The protein resides in the cytoplasm. It carries out the reaction tRNA(Lys) + L-lysine + ATP = L-lysyl-tRNA(Lys) + AMP + diphosphate. The sequence is that of Lysine--tRNA ligase from Shewanella loihica (strain ATCC BAA-1088 / PV-4).